A 201-amino-acid chain; its full sequence is Recombination protein RecR (201 aa).

The C4-type zinc finger occupies 60-75 (CHACGNVDTSDPCTIC). In terms of domain architecture, Toprim spans 83-178 (TTLVVVEDVS…TITRLAHGVP (96 aa)).

Belongs to the RecR family.

In terms of biological role, may play a role in DNA repair. It seems to be involved in an RecBC-independent recombinational process of DNA repair. It may act with RecF and RecO. In Methylorubrum populi (strain ATCC BAA-705 / NCIMB 13946 / BJ001) (Methylobacterium populi), this protein is Recombination protein RecR.